Here is a 197-residue protein sequence, read N- to C-terminus: Phospholipid hydroperoxide glutathione peroxidase (197 aa).

Phosphoserine is present on Ser-40. The active site involves Sec-73. Sec-73 is a non-standard amino acid (selenocysteine).

The protein belongs to the glutathione peroxidase family. Monomer. Has a tendency to form higher mass oligomers. Interacts with FUNDC1; this interaction promotes GPX4 recruitment into mitochondria through TOM/TIM complex where it is degraded by mitophagy.

Its subcellular location is the mitochondrion. The protein resides in the cytoplasm. The enzyme catalyses a hydroperoxy polyunsaturated fatty acid + 2 glutathione = a hydroxy polyunsaturated fatty acid + glutathione disulfide + H2O. It carries out the reaction 2 glutathione + H2O2 = glutathione disulfide + 2 H2O. The catalysed reaction is tert-butyl hydroperoxide + 2 glutathione = tert-butanol + glutathione disulfide + H2O. It catalyses the reaction cumene hydroperoxide + 2 glutathione = 2-phenylpropan-2-ol + glutathione disulfide + H2O. The enzyme catalyses (9S)-hydroperoxy-(10E,12Z)-octadecadienoate + 2 glutathione = (9S)-hydroxy-(10E,12Z)-octadecadienoate + glutathione disulfide + H2O. It carries out the reaction (13S)-hydroperoxy-(9Z,11E)-octadecadienoate + 2 glutathione = (13S)-hydroxy-(9Z,11E)-octadecadienoate + glutathione disulfide + H2O. The catalysed reaction is (5S)-hydroperoxy-(6E,8Z,11Z,14Z)-eicosatetraenoate + 2 glutathione = (5S)-hydroxy-(6E,8Z,11Z,14Z)-eicosatetraenoate + glutathione disulfide + H2O. It catalyses the reaction (12R)-hydroperoxy-(5Z,8Z,10E,14Z)-eicosatetraenoate + 2 glutathione = (12R)-hydroxy-(5Z,8Z,10E,14Z)-eicosatetraenoate + glutathione disulfide + H2O. The enzyme catalyses (12S)-hydroperoxy-(5Z,8Z,10E,14Z)-eicosatetraenoate + 2 glutathione = (12S)-hydroxy-(5Z,8Z,10E,14Z)-eicosatetraenoate + glutathione disulfide + H2O. It carries out the reaction (15S)-hydroperoxy-(5Z,8Z,11Z,13E)-eicosatetraenoate + 2 glutathione = (15S)-hydroxy-(5Z,8Z,11Z,13E)-eicosatetraenoate + glutathione disulfide + H2O. The catalysed reaction is (5S)-hydroperoxy-(6E,8Z,11Z,14Z,17Z)-eicosapentaenoate + 2 glutathione = (5S)-hydroxy-(6E,8Z,11Z,14Z,17Z)-eicosapentaenoate + glutathione disulfide + H2O. It catalyses the reaction (12S)-hydroperoxy-(5Z,8Z,10E,14Z,17Z)-eicosapentaenoate + 2 glutathione = (12S)-hydroxy-(5Z,8Z,10E,14Z,17Z)-eicosapentaenoate + glutathione disulfide + H2O. The enzyme catalyses (15S)-hydroperoxy-(5Z,8Z,11Z,13E,17Z)-eicosapentaenoate + 2 glutathione = (15S)-hydroxy-(5Z,8Z,11Z,13E,17Z)-eicosapentaenoate + glutathione disulfide + H2O. It carries out the reaction (15S)-hydroperoxy-(11Z,13E)-eicosadienoate + 2 glutathione = (15S)-hydroxy-(11Z,13E)-eicosadienoate + glutathione disulfide + H2O. The catalysed reaction is (17S)-hydroperoxy-(4Z,7Z,10Z,13Z,15E,19Z)-docosahexaenoate + 2 glutathione = (17S)-hydroxy-(4Z,7Z,10Z,13Z,15E,19Z)-docosahexaenoate + glutathione disulfide + H2O. It catalyses the reaction a hydroperoxy-1,2-diacyl-glycero-3-phosphocholine + 2 glutathione = a hydroxy-1,2-diacyl-glycero-3-phosphocholine + glutathione disulfide + H2O. Its function is as follows. Essential antioxidant peroxidase that directly reduces phospholipid hydroperoxide even if they are incorporated in membranes and lipoproteins. Can also reduce fatty acid hydroperoxide, cholesterol hydroperoxide and thymine hydroperoxide. Plays a key role in protecting cells from oxidative damage by preventing membrane lipid peroxidation. Required to prevent cells from ferroptosis, a non-apoptotic cell death resulting from an iron-dependent accumulation of lipid reactive oxygen species. The presence of selenocysteine (Sec) versus Cys at the active site is essential for life: it provides resistance to overoxidation and prevents cells against ferroptosis. The presence of Sec at the active site is also essential for the survival of a specific type of parvalbumin-positive interneurons, thereby preventing against fatal epileptic seizures. May be required to protect cells from the toxicity of ingested lipid hydroperoxides. Required for normal sperm development and male fertility. Essential for maturation and survival of photoreceptor cells. Plays a role in a primary T-cell response to viral and parasitic infection by protecting T-cells from ferroptosis and by supporting T-cell expansion. Plays a role of glutathione peroxidase in platelets in the arachidonic acid metabolism. Reduces hydroperoxy ester lipids formed by a 15-lipoxygenase that may play a role as down-regulator of the cellular 15-lipoxygenase pathway. Can also reduce small soluble hydroperoxides such as H2O2, cumene hydroperoxide and tert-butyl hydroperoxide. The polypeptide is Phospholipid hydroperoxide glutathione peroxidase (Bos taurus (Bovine)).